The primary structure comprises 715 residues: Polyribonucleotide nucleotidyltransferase (715 aa).

Mg(2+) contacts are provided by Asp-485 and Asp-491. The KH domain maps to 552 to 611 (PRIHTMKIDPKKIKDVIGKGGAVIRALTEETGTSIDIDDDGTVKIAATDNNAAKAVMARI). In terms of domain architecture, S1 motif spans 621 to 689 (NAIYKGKVTR…RQNRIRLTMK (69 aa)). The interval 695-715 (TPVAENVTEEAEVSSEQQAEI) is disordered.

Belongs to the polyribonucleotide nucleotidyltransferase family. Component of the RNA degradosome, which is a multiprotein complex involved in RNA processing and mRNA degradation. Mg(2+) serves as cofactor.

The protein localises to the cytoplasm. The enzyme catalyses RNA(n+1) + phosphate = RNA(n) + a ribonucleoside 5'-diphosphate. In terms of biological role, involved in mRNA degradation. Catalyzes the phosphorolysis of single-stranded polyribonucleotides processively in the 3'- to 5'-direction. This Actinobacillus pleuropneumoniae serotype 3 (strain JL03) protein is Polyribonucleotide nucleotidyltransferase.